A 242-amino-acid chain; its full sequence is 7-cyano-7-deazaguanine synthase (242 aa).

ATP is bound at residue 14–24; that stretch reads FSGGQDSATCL. Zn(2+)-binding residues include Cys202, Cys217, Cys220, and Cys223.

The protein belongs to the QueC family. It depends on Zn(2+) as a cofactor.

The catalysed reaction is 7-carboxy-7-deazaguanine + NH4(+) + ATP = 7-cyano-7-deazaguanine + ADP + phosphate + H2O + H(+). The protein operates within purine metabolism; 7-cyano-7-deazaguanine biosynthesis. Its function is as follows. Catalyzes the ATP-dependent conversion of 7-carboxy-7-deazaguanine (CDG) to 7-cyano-7-deazaguanine (preQ(0)). The sequence is that of 7-cyano-7-deazaguanine synthase from Rhodopseudomonas palustris (strain BisA53).